The chain runs to 999 residues: Signal peptide, CUB and EGF-like domain-containing protein 2 (999 aa).

The N-terminal stretch at 1–31 is a signal peptide; the sequence is MGVAGRNRPGAAWAVLLLLLLLPPLLLLAGA. The EGF-like 1; calcium-binding domain occupies 45–85; sequence DVDECAQGLDDCHADALCQNTPTSYKCSCKPGYQGEGRQCE. Cystine bridges form between Cys49–Cys62, Cys56–Cys71, Cys73–Cys84, Cys90–Cys102, Cys98–Cys111, and Cys113–Cys126. Positions 86 to 127 constitute an EGF-like 2; calcium-binding domain; that stretch reads DIDECGNELNGGCVHDCLNIPGNYRCTCFDGFMLAHDGHNCL. The EGF-like 3; calcium-binding domain occupies 128–168; the sequence is DVDECLENNGGCQHTCVNVMGSYECCCKEGFFLSDNQHTCI. EGF-like domains follow at residues 177 to 213, 217 to 252, and 286 to 321; these read CMNKDHGCSHICKEAPRGSVACECRPGFELAKNQRDC, CNHGNGGCQHSCDDTADGPECSCHPQYKMHTDGRSC, and CAVNNGGCDRTCKDTSTGVHCSCPVGFTLQLDGKTC. The 41-residue stretch at 323-363 folds into the EGF-like 7; calcium-binding domain; the sequence is DIDECQTRNGGCDHFCKNIVGSFDCGCKKGFKLLTDEKSCQ. Residues 364–402 form the EGF-like 8; calcium-binding domain; it reads DVDECSLDRTCDHSCINHPGTFACACNRGYTLYGFTHCG. 6 cysteine pairs are disulfide-bonded: Cys368–Cys378, Cys374–Cys387, Cys389–Cys401, Cys407–Cys418, Cys414–Cys427, and Cys429–Cys442. The region spanning 403–443 is the EGF-like 9; calcium-binding domain; that stretch reads DTNECSINNGGCQQVCVNTVGSYECQCHPGYKLHWNKKDCV. Residue Asn659 is glycosylated (N-linked (GlcNAc...) asparagine). A disulfide bridge links Cys809 with Cys835. The CUB domain maps to 809–921; that stretch reads CGGELGDFTG…RGFQVPYVTY (113 aa). Positions 847–856 are interaction with the cholesterol-anchor of SHH; sequence ILIVVPEIFL. A disulfide bond links Cys862 and Cys883.

As to quaternary structure, forms homooligomers. Forms heterooligomers with SCUBE1. Forms heterooligomers with SCUBE3. Interacts with SHH via the cholesterol anchor of the dually lipid-modified SHH (ShhNp). Interacts with PTCH1. Interacts with VEGFR2. In terms of processing, N-glycosylated. In terms of tissue distribution, expressed in a broad spectrum of adult tissues.

It is found in the secreted. The protein resides in the cell surface. Its function is as follows. Lipid-binding protein required for SHH long-range signaling by binding to the dually lipid-modified SHH (ShhNp) and by promoting ShhNp mobilization, solubilization and release from the cell membrane. Acts by enhancing the proteolytic processing (shedding) of the lipid-modified N- and C- terminal of ShhNp at the cell surface. Synergizes with DISP1 to increase SHH secretion. Probable cell surface coreceptor for VEGFR2 involved in VEGFR2-mediated angiogenesis. The chain is Signal peptide, CUB and EGF-like domain-containing protein 2 from Homo sapiens (Human).